The following is a 132-amino-acid chain: Thioredoxin H4-2 (132 aa).

The region spanning 18 to 130 is the Thioredoxin domain; it reads DFKGGNVHVI…LEKKVQALAD (113 aa). Catalysis depends on nucleophile residues Cys56 and Cys59. An intrachain disulfide couples Cys56 to Cys59.

Belongs to the thioredoxin family. Plant H-type subfamily.

The protein resides in the cytoplasm. In terms of biological role, probable thiol-disulfide oxidoreductase that may be involved in the redox regulation of a number of cytosolic enzymes. This chain is Thioredoxin H4-2, found in Oryza sativa subsp. japonica (Rice).